Here is an 834-residue protein sequence, read N- to C-terminus: Meiotic sister-chromatid recombination protein 3 (834 aa).

Disordered stretches follow at residues 75–136 (PAAA…QPRT), 251–291 (EETE…TGSL), 343–378 (RKLA…KQPL), and 458–479 (VRRS…KKLT). Over residues 343-368 (RKLAQPQQGQNQRRTVSFTQGSIDHM) the composition is skewed to polar residues.

The protein localises to the cell membrane. Functionally, may be involved in the control of meiotic sister-chromatid recombination. This is Meiotic sister-chromatid recombination protein 3 (MSC3) from Candida glabrata (strain ATCC 2001 / BCRC 20586 / JCM 3761 / NBRC 0622 / NRRL Y-65 / CBS 138) (Yeast).